We begin with the raw amino-acid sequence, 1132 residues long: Phytochrome B (1132 aa).

Residues 1-11 (MASGSRTKHSH) show a composition bias toward basic residues. A disordered region spans residues 1–27 (MASGSRTKHSHQSGQGQVQAQSSGTSN). Positions 12–26 (QSGQGQVQAQSSGTS) are enriched in low complexity. The GAF domain occupies 231 to 409 (DVKLLCDTVV…AFGLQLNMEL (179 aa)). Cys336 is a phytochromobilin binding site. 2 PAS domains span residues 623–694 (VARE…LRGE) and 757–828 (DYKA…MIVL). The 221-residue stretch at 905–1125 (YLCQEIKSPL…LIILDLPMTR (221 aa)) folds into the Histidine kinase domain.

The protein belongs to the phytochrome family. In terms of assembly, homodimer. In terms of processing, contains one covalently linked phytochromobilin chromophore.

Regulatory photoreceptor which exists in two forms that are reversibly interconvertible by light: the Pr form that absorbs maximally in the red region of the spectrum and the Pfr form that absorbs maximally in the far-red region. Photoconversion of Pr to Pfr induces an array of morphogenic responses, whereas reconversion of Pfr to Pr cancels the induction of those responses. Pfr controls the expression of a number of nuclear genes including those encoding the small subunit of ribulose-bisphosphate carboxylase, chlorophyll A/B binding protein, protochlorophyllide reductase, rRNA, etc. It also controls the expression of its own gene(s) in a negative feedback fashion. This is Phytochrome B (PHYB) from Nicotiana tabacum (Common tobacco).